The chain runs to 382 residues: S-adenosylmethionine decarboxylase proenzyme (382 aa).

Phe-32 is a substrate binding site. Residues Glu-33 and Glu-36 contribute to the active site. Leu-87 provides a ligand contact to substrate. The active-site Schiff-base intermediate with substrate; via pyruvic acid is the Ser-90. Pyruvic acid (Ser); by autocatalysis is present on Ser-90. Residue Cys-104 is the Proton donor; for catalytic activity of the active site. Phe-248 is a binding site for substrate. Active-site proton acceptor; for processing activity residues include Ser-254 and His-267. Glu-271 serves as a coordination point for substrate.

This sequence belongs to the eukaryotic AdoMetDC family. Heterotetramer of two alpha and two beta chains. Pyruvate is required as a cofactor. Post-translationally, is synthesized initially as an inactive proenzyme. Formation of the active enzyme involves a self-maturation process in which the active site pyruvoyl group is generated from an internal serine residue via an autocatalytic post-translational modification. Two non-identical subunits are generated from the proenzyme in this reaction, and the pyruvate is formed at the N-terminus of the alpha chain, which is derived from the carboxyl end of the proenzyme. The post-translation cleavage follows an unusual pathway, termed non-hydrolytic serinolysis, in which the side chain hydroxyl group of the serine supplies its oxygen atom to form the C-terminus of the beta chain, while the remainder of the serine residue undergoes an oxidative deamination to produce ammonia and the pyruvoyl group blocking the N-terminus of the alpha chain.

The enzyme catalyses S-adenosyl-L-methionine + H(+) = S-adenosyl 3-(methylsulfanyl)propylamine + CO2. It functions in the pathway amine and polyamine biosynthesis; S-adenosylmethioninamine biosynthesis; S-adenosylmethioninamine from S-adenosyl-L-methionine: step 1/1. The chain is S-adenosylmethionine decarboxylase proenzyme from Leishmania donovani.